The chain runs to 695 residues: Elongation factor G (695 aa).

The tr-type G domain maps to 12–286; sequence DKLRNIGIMA…AVIDYLPSPL (275 aa). GTP-binding positions include 21–28, 85–89, and 139–142; these read AHIDAGKT, DTPGH, and NKMD.

This sequence belongs to the TRAFAC class translation factor GTPase superfamily. Classic translation factor GTPase family. EF-G/EF-2 subfamily.

It localises to the cytoplasm. Catalyzes the GTP-dependent ribosomal translocation step during translation elongation. During this step, the ribosome changes from the pre-translocational (PRE) to the post-translocational (POST) state as the newly formed A-site-bound peptidyl-tRNA and P-site-bound deacylated tRNA move to the P and E sites, respectively. Catalyzes the coordinated movement of the two tRNA molecules, the mRNA and conformational changes in the ribosome. The chain is Elongation factor G from Thermotoga petrophila (strain ATCC BAA-488 / DSM 13995 / JCM 10881 / RKU-1).